The following is an 874-amino-acid chain: Alanine--tRNA ligase (874 aa).

Residues His-562, His-566, Cys-665, and His-669 each coordinate Zn(2+).

Belongs to the class-II aminoacyl-tRNA synthetase family. Zn(2+) is required as a cofactor.

The protein localises to the cytoplasm. The enzyme catalyses tRNA(Ala) + L-alanine + ATP = L-alanyl-tRNA(Ala) + AMP + diphosphate. Catalyzes the attachment of alanine to tRNA(Ala) in a two-step reaction: alanine is first activated by ATP to form Ala-AMP and then transferred to the acceptor end of tRNA(Ala). Also edits incorrectly charged Ser-tRNA(Ala) and Gly-tRNA(Ala) via its editing domain. This chain is Alanine--tRNA ligase, found in Pseudomonas syringae pv. tomato (strain ATCC BAA-871 / DC3000).